Here is a 477-residue protein sequence, read N- to C-terminus: Probable periplasmic serine endoprotease DegP-like (477 aa).

A signal peptide spans 1–27 (MSIPRLKSYLMMFAAVLMLGQVLTAQA). Residues His117, Asp147, and Ser220 each act as charge relay system in the active site. Substrate-binding positions include 218-220 (GNS) and 275-279 (LGVVI). 2 PDZ domains span residues 264-355 (LKKD…IRNG) and 361-466 (DISV…LRQG).

This sequence belongs to the peptidase S1C family.

It is found in the periplasm. The enzyme catalyses Acts on substrates that are at least partially unfolded. The cleavage site P1 residue is normally between a pair of hydrophobic residues, such as Val-|-Val.. Its function is as follows. Might be efficient in the degradation of transiently denatured and unfolded proteins which accumulate in the periplasm following stress conditions. The polypeptide is Probable periplasmic serine endoprotease DegP-like (Pseudomonas putida (strain ATCC 700007 / DSM 6899 / JCM 31910 / BCRC 17059 / LMG 24140 / F1)).